Reading from the N-terminus, the 198-residue chain is Holliday junction resolvase RecU (198 aa).

The interval 1–22 (MVNYPHKLSSQKRQTSLSQPKN) is disordered. Over residues 11-22 (QKRQTSLSQPKN) the composition is skewed to polar residues. Mg(2+)-binding residues include Thr81, Asp83, Glu96, and Gln115.

It belongs to the RecU family. Mg(2+) serves as cofactor.

It is found in the cytoplasm. The catalysed reaction is Endonucleolytic cleavage at a junction such as a reciprocal single-stranded crossover between two homologous DNA duplexes (Holliday junction).. Its function is as follows. Endonuclease that resolves Holliday junction intermediates in genetic recombination. Cleaves mobile four-strand junctions by introducing symmetrical nicks in paired strands. Promotes annealing of linear ssDNA with homologous dsDNA. Required for DNA repair, homologous recombination and chromosome segregation. The polypeptide is Holliday junction resolvase RecU (Streptococcus pneumoniae (strain Hungary19A-6)).